Consider the following 294-residue polypeptide: Eukaryotic translation initiation factor 3 subunit G (294 aa).

Disordered stretches follow at residues 1 to 43 (MPSA…ENKI) and 160 to 211 (EDDG…RDET). Residues 194–211 (GANRRGETMPSRSQRDET) are compositionally biased toward basic and acidic residues. The RRM domain occupies 212-290 (ATIRVTNLSE…LILNVEWAKP (79 aa)).

The protein belongs to the eIF-3 subunit G family. In terms of assembly, component of the eukaryotic translation initiation factor 3 (eIF-3) complex.

Its subcellular location is the cytoplasm. Its function is as follows. RNA-binding component of the eukaryotic translation initiation factor 3 (eIF-3) complex, which is involved in protein synthesis of a specialized repertoire of mRNAs and, together with other initiation factors, stimulates binding of mRNA and methionyl-tRNAi to the 40S ribosome. The eIF-3 complex specifically targets and initiates translation of a subset of mRNAs involved in cell proliferation. This subunit can bind 18S rRNA. This Nematostella vectensis (Starlet sea anemone) protein is Eukaryotic translation initiation factor 3 subunit G.